The chain runs to 91 residues: Elongation factor 1-beta (91 aa).

Belongs to the EF-1-beta/EF-1-delta family.

Promotes the exchange of GDP for GTP in EF-1-alpha/GDP, thus allowing the regeneration of EF-1-alpha/GTP that could then be used to form the ternary complex EF-1-alpha/GTP/AAtRNA. This chain is Elongation factor 1-beta, found in Saccharolobus islandicus (strain Y.N.15.51 / Yellowstone #2) (Sulfolobus islandicus).